Consider the following 652-residue polypeptide: UvrABC system protein C (652 aa).

The region spanning 37–116 (KSSGCYLFKD…IKTNKPYFNI (80 aa)) is the GIY-YIG domain. The UVR domain maps to 226-261 (DDLEIFLQKKMLQFSNDLDYENAAKIRDQISGLKLL).

The protein belongs to the UvrC family. Interacts with UvrB in an incision complex.

The protein localises to the cytoplasm. In terms of biological role, the UvrABC repair system catalyzes the recognition and processing of DNA lesions. UvrC both incises the 5' and 3' sides of the lesion. The N-terminal half is responsible for the 3' incision and the C-terminal half is responsible for the 5' incision. In Prochlorococcus marinus (strain MIT 9312), this protein is UvrABC system protein C.